A 138-amino-acid polypeptide reads, in one-letter code: Putative pre-16S rRNA nuclease (138 aa).

Belongs to the YqgF nuclease family.

It localises to the cytoplasm. Could be a nuclease involved in processing of the 5'-end of pre-16S rRNA. This is Putative pre-16S rRNA nuclease from Polaromonas sp. (strain JS666 / ATCC BAA-500).